We begin with the raw amino-acid sequence, 132 residues long: ATP synthase epsilon chain (132 aa).

It belongs to the ATPase epsilon chain family. As to quaternary structure, F-type ATPases have 2 components, CF(1) - the catalytic core - and CF(0) - the membrane proton channel. CF(1) has five subunits: alpha(3), beta(3), gamma(1), delta(1), epsilon(1). CF(0) has three main subunits: a, b and c.

The protein resides in the cell inner membrane. Functionally, produces ATP from ADP in the presence of a proton gradient across the membrane. The protein is ATP synthase epsilon chain of Anaeromyxobacter sp. (strain Fw109-5).